Reading from the N-terminus, the 44-residue chain is DNA-directed RNA polymerase subunit Rpo12 (44 aa).

Zn(2+)-binding residues include Cys8, Cys22, and Cys25.

Belongs to the archaeal Rpo12/eukaryotic RPC10 RNA polymerase subunit family. In terms of assembly, part of the RNA polymerase complex. Zn(2+) is required as a cofactor.

The protein localises to the cytoplasm. It carries out the reaction RNA(n) + a ribonucleoside 5'-triphosphate = RNA(n+1) + diphosphate. In terms of biological role, DNA-dependent RNA polymerase (RNAP) catalyzes the transcription of DNA into RNA using the four ribonucleoside triphosphates as substrates. The protein is DNA-directed RNA polymerase subunit Rpo12 of Halobacterium salinarum (strain ATCC 29341 / DSM 671 / R1).